Here is a 302-residue protein sequence, read N- to C-terminus: MDEKRLTHLRQLEAESIHIIREVAAEFGNPVMLYSIGKDSSVMLHLARKAFFPGTLPFPLLHVDTGWKFSEMYQFRDRTAKEYGFELLVHKNPEGVAMGINPFVHGSAKHTDIMKTEGLKQALNKYGFDAAFGGARRDEEKSRAKERIYSFRDRFHRWDPKNQRPELWHNYNGQINKGESIRVFPLSNWTELDIWQYIFLEKIDIIPLYLAKPRPVVERDGMLLMVDDDRIDLQPGEVISQRMVRFRTLGCWPLTGAVESEAQTLPEIIEEMLVSTTSERQGRMIDRDQSGSMELKKRQGYF.

It belongs to the PAPS reductase family. CysD subfamily. In terms of assembly, heterodimer composed of CysD, the smaller subunit, and CysN.

The catalysed reaction is sulfate + ATP + H(+) = adenosine 5'-phosphosulfate + diphosphate. The protein operates within sulfur metabolism; hydrogen sulfide biosynthesis; sulfite from sulfate: step 1/3. With CysN forms the ATP sulfurylase (ATPS) that catalyzes the adenylation of sulfate producing adenosine 5'-phosphosulfate (APS) and diphosphate, the first enzymatic step in sulfur assimilation pathway. APS synthesis involves the formation of a high-energy phosphoric-sulfuric acid anhydride bond driven by GTP hydrolysis by CysN coupled to ATP hydrolysis by CysD. The chain is Sulfate adenylyltransferase subunit 2 from Serratia proteamaculans (strain 568).